A 416-amino-acid chain; its full sequence is Adrenocortical dysplasia protein (416 aa).

The PWI motif lies at 11–13 (PWI). Serine 25 is modified (phosphoserine). The interaction with POT1 stretch occupies residues 156 to 245 (ESASSSAGLT…SSTGSSQKAR (90 aa)). A compositionally biased stretch (polar residues) spans 234-251 (ILSSTGSSQKARGTSASP). The segment at 234-306 (ILSSTGSSQK…TSPPCNSTPS (73 aa)) is disordered. The segment covering 259-272 (SGASVSLLSALATS) has biased composition (low complexity). Positions 273–292 (DPGQMDSSQSPPAVGSTSPR) are enriched in polar residues. 2 positions are modified to phosphoserine: serine 313 and serine 317. Residue lysine 345 forms a Glycyl lysine isopeptide (Lys-Gly) (interchain with G-Cter in SUMO2) linkage.

In terms of assembly, component of the shelterin complex (telosome) composed of TERF1, TERF2, TINF2, TERF2IP ACD and POT1. Forms heterodimers with POT1. Identified in a complex with POT1 and single-stranded telomeric DNA. Interacts with STN1 and TINF2. In terms of tissue distribution, ubiquitous.

It localises to the nucleus. The protein resides in the chromosome. It is found in the telomere. Functionally, component of the shelterin complex (telosome) that is involved in the regulation of telomere length and protection. Shelterin associates with arrays of double-stranded TTAGGG repeats added by telomerase and protects chromosome ends. Without its protective activity, telomeres are no longer hidden from the DNA damage surveillance and chromosome ends are inappropriately processed by DNA repair pathways. Promotes binding of POT1 to single-stranded telomeric DNA. Modulates the inhibitory effects of POT1 on telomere elongation. The ACD-POT1 heterodimer enhances telomere elongation by recruiting telomerase to telomeres and increasing its processivity. May play a role in organogenesis. In Mus musculus (Mouse), this protein is Adrenocortical dysplasia protein.